The primary structure comprises 602 residues: Type 2 DNA topoisomerase 6 subunit B (602 aa).

ATP-binding positions include Asn40, Asp71, Ser92–Arg93, Gly102–Ser109, and Lys425.

This sequence belongs to the TOP6B family. Homodimer. Heterotetramer of two Top6A and two Top6B chains.

It catalyses the reaction ATP-dependent breakage, passage and rejoining of double-stranded DNA.. In terms of biological role, relaxes both positive and negative superturns and exhibits a strong decatenase activity. This chain is Type 2 DNA topoisomerase 6 subunit B, found in Archaeoglobus fulgidus (strain ATCC 49558 / DSM 4304 / JCM 9628 / NBRC 100126 / VC-16).